We begin with the raw amino-acid sequence, 602 residues long: Myotubularin (602 aa).

Residues 1-40 are disordered; that stretch reads MASSSASDCDAHPVERESMRKVSQDGVRQDMSKSGPRLPG. Over residues 9 to 31 the composition is skewed to basic and acidic residues; that stretch reads CDAHPVERESMRKVSQDGVRQDM. A Phosphoserine modification is found at serine 18. One can recognise a GRAM domain in the interval 28–97; it reads RQDMSKSGPR…GVISRIEKMG (70 aa). The region spanning 163 to 538 is the Myotubularin phosphatase domain; the sequence is GWAIYNPVEE…RHLELWVNYY (376 aa). Asparagine 288, asparagine 313, and isoleucine 314 together coordinate a 1,2-diacyl-sn-glycero-3-phospho-(1D-myo-inositol-3,5-bisphosphate). Residues asparagine 288, asparagine 313, and isoleucine 314 each coordinate a 1,2-diacyl-sn-glycero-3-phospho-(1D-myo-inositol-3-phosphate). Cysteine 375 acts as the Phosphocysteine intermediate in catalysis. A 1,2-diacyl-sn-glycero-3-phospho-(1D-myo-inositol-3,5-bisphosphate) contacts are provided by serine 376, aspartate 377, glycine 378, tryptophan 379, aspartate 380, arginine 381, lysine 417, and arginine 421. Serine 376, aspartate 377, glycine 378, tryptophan 379, aspartate 380, and arginine 381 together coordinate a 1,2-diacyl-sn-glycero-3-phospho-(1D-myo-inositol-3-phosphate). Position 421 (arginine 421) interacts with a 1,2-diacyl-sn-glycero-3-phospho-(1D-myo-inositol-3-phosphate). Phosphothreonine is present on threonine 495. Residues 578-592 show a composition bias toward polar residues; the sequence is PTKLTDSSTPPSGSA. The segment at 578–602 is disordered; that stretch reads PTKLTDSSTPPSGSAQIAPRMQTHF.

This sequence belongs to the protein-tyrosine phosphatase family. Non-receptor class myotubularin subfamily. Heterodimer with MTMR12. Interacts with KMT2A/MLL1 (via SET domain). Interacts with DES in skeletal muscle but not in cardiac muscle. Interacts with SPEG.

The protein localises to the cytoplasm. It localises to the cell membrane. The protein resides in the cell projection. Its subcellular location is the filopodium. It is found in the ruffle. The protein localises to the late endosome. It localises to the myofibril. The protein resides in the sarcomere. The catalysed reaction is a 1,2-diacyl-sn-glycero-3-phospho-(1D-myo-inositol-3-phosphate) + H2O = a 1,2-diacyl-sn-glycero-3-phospho-(1D-myo-inositol) + phosphate. The enzyme catalyses a 1,2-diacyl-sn-glycero-3-phospho-(1D-myo-inositol-3,5-bisphosphate) + H2O = a 1,2-diacyl-sn-glycero-3-phospho-(1D-myo-inositol-5-phosphate) + phosphate. It catalyses the reaction 1,2-dioctanoyl-sn-glycero-3-phospho-(1-D-myo-inositol-3-phosphate) + H2O = 1,2-dioctanoyl-sn-glycero-3-phospho-(1D-myo-inositol) + phosphate. It carries out the reaction 1,2-dioctanoyl-sn-glycero-3-phospho-(1D-myo-inositol-3,5-bisphosphate) + H2O = 1,2-dioctanoyl-sn-glycero-3-phospho-(1D-myo-inositol-5-phosphate) + phosphate. The catalysed reaction is 1,2-dihexadecanoyl-sn-glycero-3-phospho-(1D-myo-inositol-3,5-phosphate) + H2O = 1,2-dihexadecanoyl-sn-glycero-3-phospho-(1D-myo-inositol-5-phosphate) + phosphate. With respect to regulation, allosterically activated by phosphatidylinositol 5-phosphate (PI5P). Lipid phosphatase which dephosphorylates phosphatidylinositol 3-monophosphate (PI3P) and phosphatidylinositol 3,5-bisphosphate (PI(3,5)P2). Has also been shown to dephosphorylate phosphotyrosine- and phosphoserine-containing peptides. Negatively regulates EGFR degradation through regulation of EGFR trafficking from the late endosome to the lysosome. Plays a role in vacuolar formation and morphology. Regulates desmin intermediate filament assembly and architecture. Plays a role in mitochondrial morphology and positioning. Required for skeletal muscle maintenance but not for myogenesis. In skeletal muscles, stabilizes MTMR12 protein levels. The polypeptide is Myotubularin (Rattus norvegicus (Rat)).